The chain runs to 198 residues: DnaJ homolog subfamily C member 12 (198 aa).

Methionine 1 carries the N-acetylmethionine modification. Positions 14–79 (DYYALLGCDE…ESRARYDHWR (66 aa)) constitute a J domain. The tract at residues 114–177 (EGSGQTFTSS…GLSDLNCGHL (64 aa)) is disordered. The span at 116–125 (SGQTFTSSVP) shows a compositional bias: polar residues. Over residues 126-156 (NKERSEQRETKKGDPDSNPEKMKQKEPKFPE) the composition is skewed to basic and acidic residues. Serine 160, serine 166, and serine 182 each carry phosphoserine.

In terms of assembly, interacts with HSPA8. Interacts with TPH1. Interacts with TPH2. Highest levels of expression are detected in kidney, pineal gland, and raphe nuclei in the brain where it localizes to serotonerigic neurons.

Its subcellular location is the cytoplasm. Functionally, probable co-chaperone that participates in the proper folding of biopterin-dependent aromatic amino acid hydroxylases, which include phenylalanine-4-hydroxylase (PAH), tyrosine 3-monooxygenase (TH) and peripheral and neuronal tryptophan hydroxylases (TPH1 and TPH2). The chain is DnaJ homolog subfamily C member 12 (Dnajc12) from Mus musculus (Mouse).